Here is a 525-residue protein sequence, read N- to C-terminus: Ent-kaurene oxidase (525 aa).

The helical transmembrane segment at V31–L51 threads the bilayer. C466 is a heme binding site.

It belongs to the cytochrome P450 family. It depends on heme as a cofactor.

It localises to the membrane. It catalyses the reaction ent-kaur-16-ene + 3 reduced [NADPH--hemoprotein reductase] + 3 O2 = ent-kaur-16-en-19-oate + 3 oxidized [NADPH--hemoprotein reductase] + 4 H2O + 4 H(+). The protein operates within plant hormone biosynthesis; gibberellin biosynthesis. Its function is as follows. Catalyzes three successive oxidations of the 4-methyl group of ent-kaurene giving kaurenoic acid, a key step in gibberellin (GA) biosynthesis. This chain is Ent-kaurene oxidase (CYP503A1), found in Gibberella intermedia (Bulb rot disease fungus).